The primary structure comprises 433 residues: Shikimate O-hydroxycinnamoyltransferase (433 aa).

The active-site Proton acceptor is the His153. 4-coumaroyl-CoA contacts are provided by residues 252–255, 284–290, and 370–373; these read SSYE, DGRSRLR, and SWVR. The Proton acceptor role is filled by Asp380.

The protein belongs to the plant acyltransferase family.

It carries out the reaction shikimate + 4-coumaroyl-CoA = trans-4-coumaroylshikimate + CoA. Functionally, acyltransferase involved in the biosynthesis of lignin. Accepts caffeoyl-CoA and p-coumaroyl-CoA as substrates and transfers the acyl group on both shikimate and quinate acceptors. This chain is Shikimate O-hydroxycinnamoyltransferase (HST), found in Arabidopsis thaliana (Mouse-ear cress).